The chain runs to 336 residues: NADH-quinone oxidoreductase subunit H (336 aa).

A run of 8 helical transmembrane segments spans residues 12–32, 84–104, 118–138, 156–176, 193–213, 247–267, 274–294, and 313–333; these read FLKIVIVFSLALGIGAYLTWF, VVMALVPSILLLTIIPFGPGF, VNIALLLAFAFGSLSVYGTIF, AAVVIAYEVVLGFSVLGVILL, GVWFIFYQPVAFILYLFCMLA, LAEWYVNVIALSAIAVVLFFG, IFGPLSPYFWFVFKTFALVFF, and IAWKILLPIAILNVIITAVVV.

Belongs to the complex I subunit 1 family. In terms of assembly, NDH-1 is composed of 14 different subunits. Subunits NuoA, H, J, K, L, M, N constitute the membrane sector of the complex.

Its subcellular location is the cell inner membrane. It catalyses the reaction a quinone + NADH + 5 H(+)(in) = a quinol + NAD(+) + 4 H(+)(out). Its function is as follows. NDH-1 shuttles electrons from NADH, via FMN and iron-sulfur (Fe-S) centers, to quinones in the respiratory chain. The immediate electron acceptor for the enzyme in this species is believed to be ubiquinone. Couples the redox reaction to proton translocation (for every two electrons transferred, four hydrogen ions are translocated across the cytoplasmic membrane), and thus conserves the redox energy in a proton gradient. This subunit may bind ubiquinone. This Aquifex aeolicus (strain VF5) protein is NADH-quinone oxidoreductase subunit H.